The sequence spans 326 residues: Thioredoxin reductase (326 aa).

55–62 serves as a coordination point for FAD; sequence EGPEPGGQ. The cysteines at positions 156 and 159 are disulfide-linked. 298–307 contributes to the FAD binding site; the sequence is DVSNKLYAQA.

It belongs to the class-II pyridine nucleotide-disulfide oxidoreductase family. As to quaternary structure, homodimer. FAD is required as a cofactor.

The protein resides in the cytoplasm. It carries out the reaction [thioredoxin]-dithiol + NADP(+) = [thioredoxin]-disulfide + NADPH + H(+). The chain is Thioredoxin reductase (trxB) from Borreliella burgdorferi (strain ATCC 35210 / DSM 4680 / CIP 102532 / B31) (Borrelia burgdorferi).